Reading from the N-terminus, the 598-residue chain is Pentatricopeptide repeat-containing protein At5g14820, mitochondrial (598 aa).

The N-terminal 98 residues, 1 to 98, are a transit peptide targeting the mitochondrion; it reads MAAAPWLYLS…RGFSSGSSNV (98 aa). PPR repeat units follow at residues 193–227, 229–261, 262–292, 296–330, 331–365, 366–400, 401–435, 436–470, 471–505, and 506–540; these read DSRT…GLLT, ETFT…KFKI, GVET…LKER, NMMT…GLKP, DIVA…GPCP, NVRS…GLQP, DAAV…GHPP, DGKT…EIEP, SIHT…GICP, and DDNS…GMKT.

The protein belongs to the PPR family. P subfamily.

Its subcellular location is the mitochondrion. The chain is Pentatricopeptide repeat-containing protein At5g14820, mitochondrial from Arabidopsis thaliana (Mouse-ear cress).